The sequence spans 353 residues: Guanine nucleotide-binding protein subunit beta-5 (353 aa).

WD repeat units lie at residues 61–100 (GHGN…KEHA), 103–142 (MPCT…NENM), 151–192 (MHTN…QSFH), 194–236 (HGAD…QAFE), 237–276 (THES…EVAI), 278–320 (SKES…RVSI), and 323–352 (GHEN…LRVW).

It belongs to the WD repeat G protein beta family. Component of a complex composed of RGS9 (isoform RGS9-1), GNB5 and RGS9BP; within this complex, the presence of GNB5 stabilizes both itself and RGS9 and increases RGS9 GTPase-activating protein (GAP) activity. Interacts with RGS7, forming the RGS7-GNB5 complex; within this complex, the presence of GNB5 increases RGS7 GTPase-activating protein (GAP) activity. Interacts with GPR158; promotes the GTPase activator activity of the RGS7-GNB5 complex in absence of glycine, in contrast GTPase activator activity of the RGS7-GNB5 complex is inhibited in presence of glycine. Interacts with RGS6. Detected in brain.

Its subcellular location is the membrane. Enhances GTPase-activating protein (GAP) activity of regulator of G protein signaling (RGS) proteins, such as RGS7 and RGS9, hence involved in the termination of the signaling initiated by the G protein coupled receptors (GPCRs) by accelerating the GTP hydrolysis on the G-alpha subunits, thereby promoting their inactivation. Increases RGS7 GTPase-activating protein (GAP) activity, thereby regulating mood and cognition. Increases RGS9 GTPase-activating protein (GAP) activity, hence contributes to the deactivation of G protein signaling initiated by D(2) dopamine receptors. May play an important role in neuronal signaling, including in the parasympathetic, but not sympathetic, control of heart rate. This is Guanine nucleotide-binding protein subunit beta-5 (Gnb5) from Rattus norvegicus (Rat).